Consider the following 324-residue polypeptide: Probable non-intrinsic ABC protein 5 (324 aa).

An ABC transporter domain is found at 2–111 (DRERYDKVIE…ADLTLVMKDG (110 aa)). Helical transmembrane passes span 212–232 (YITLAYGGALVPFILLGQILF) and 259–279 (LSTLMVVYVALAFGSSLCILV). Positions 222–324 (VPFILLGQIL…TCSKTCIYSS (103 aa)) constitute an ABC transmembrane type-1 domain.

The protein belongs to the ABC transporter superfamily.

The protein resides in the membrane. The sequence is that of Probable non-intrinsic ABC protein 5 (NAP5) from Arabidopsis thaliana (Mouse-ear cress).